A 349-amino-acid polypeptide reads, in one-letter code: tRNA N6-adenosine threonylcarbamoyltransferase (349 aa).

Positions 115 and 119 each coordinate Fe cation. Substrate-binding positions include 137-141 (LASGG), Asp-170, Gly-183, and Asn-281. Asp-309 contacts Fe cation.

This sequence belongs to the KAE1 / TsaD family. Requires Fe(2+) as cofactor.

The protein localises to the cytoplasm. The enzyme catalyses L-threonylcarbamoyladenylate + adenosine(37) in tRNA = N(6)-L-threonylcarbamoyladenosine(37) in tRNA + AMP + H(+). Functionally, required for the formation of a threonylcarbamoyl group on adenosine at position 37 (t(6)A37) in tRNAs that read codons beginning with adenine. Is involved in the transfer of the threonylcarbamoyl moiety of threonylcarbamoyl-AMP (TC-AMP) to the N6 group of A37, together with TsaE and TsaB. TsaD likely plays a direct catalytic role in this reaction. The sequence is that of tRNA N6-adenosine threonylcarbamoyltransferase from Methylobacterium nodulans (strain LMG 21967 / CNCM I-2342 / ORS 2060).